The following is a 178-amino-acid chain: ATP synthase subunit delta (178 aa).

It belongs to the ATPase delta chain family. F-type ATPases have 2 components, F(1) - the catalytic core - and F(0) - the membrane proton channel. F(1) has five subunits: alpha(3), beta(3), gamma(1), delta(1), epsilon(1). F(0) has three main subunits: a(1), b(2) and c(10-14). The alpha and beta chains form an alternating ring which encloses part of the gamma chain. F(1) is attached to F(0) by a central stalk formed by the gamma and epsilon chains, while a peripheral stalk is formed by the delta and b chains.

It is found in the cell membrane. Its function is as follows. F(1)F(0) ATP synthase produces ATP from ADP in the presence of a proton or sodium gradient. F-type ATPases consist of two structural domains, F(1) containing the extramembraneous catalytic core and F(0) containing the membrane proton channel, linked together by a central stalk and a peripheral stalk. During catalysis, ATP synthesis in the catalytic domain of F(1) is coupled via a rotary mechanism of the central stalk subunits to proton translocation. This protein is part of the stalk that links CF(0) to CF(1). It either transmits conformational changes from CF(0) to CF(1) or is implicated in proton conduction. In Streptococcus equi subsp. zooepidemicus (strain H70), this protein is ATP synthase subunit delta.